A 405-amino-acid polypeptide reads, in one-letter code: Formin-like protein 15a (405 aa).

The interval 1–31 (MSLVEISGSDAMAAPMPGRVPPPPPRPPPMP) is disordered. The segment covering 18–31 (GRVPPPPPRPPPMP) has biased composition (pro residues). Positions 52 to 405 (FPRPAKKRAS…VCWFFVRLMI (354 aa)) constitute an FH2 domain.

The protein belongs to the formin-like family. Class-II subfamily.

The chain is Formin-like protein 15a (FH15A) from Arabidopsis thaliana (Mouse-ear cress).